Consider the following 184-residue polypeptide: ATP synthase subunit b, chloroplastic (184 aa).

A helical transmembrane segment spans residues 31–53 (LINLAVVIGVLVYFGKGVLTTIL).

This sequence belongs to the ATPase B chain family. F-type ATPases have 2 components, F(1) - the catalytic core - and F(0) - the membrane proton channel. F(1) has five subunits: alpha(3), beta(3), gamma(1), delta(1), epsilon(1). F(0) has four main subunits: a(1), b(1), b'(1) and c(10-14). The alpha and beta chains form an alternating ring which encloses part of the gamma chain. F(1) is attached to F(0) by a central stalk formed by the gamma and epsilon chains, while a peripheral stalk is formed by the delta, b and b' chains.

It is found in the plastid. It localises to the chloroplast thylakoid membrane. Its function is as follows. F(1)F(0) ATP synthase produces ATP from ADP in the presence of a proton or sodium gradient. F-type ATPases consist of two structural domains, F(1) containing the extramembraneous catalytic core and F(0) containing the membrane proton channel, linked together by a central stalk and a peripheral stalk. During catalysis, ATP synthesis in the catalytic domain of F(1) is coupled via a rotary mechanism of the central stalk subunits to proton translocation. In terms of biological role, component of the F(0) channel, it forms part of the peripheral stalk, linking F(1) to F(0). The protein is ATP synthase subunit b, chloroplastic of Staurastrum punctulatum (Green alga).